Reading from the N-terminus, the 151-residue chain is Large ribosomal subunit protein bL9 (151 aa).

It belongs to the bacterial ribosomal protein bL9 family.

Functionally, binds to the 23S rRNA. This is Large ribosomal subunit protein bL9 from Mycolicibacterium gilvum (strain PYR-GCK) (Mycobacterium gilvum (strain PYR-GCK)).